The sequence spans 498 residues: ATP synthase subunit beta, chloroplastic (498 aa).

Thr6 carries the post-translational modification Phosphothreonine. A Phosphoserine modification is found at Ser13. ATP is bound at residue 172-179 (GGAGVGKT).

It belongs to the ATPase alpha/beta chains family. F-type ATPases have 2 components, CF(1) - the catalytic core - and CF(0) - the membrane proton channel. CF(1) has five subunits: alpha(3), beta(3), gamma(1), delta(1), epsilon(1). CF(0) has four main subunits: a(1), b(1), b'(1) and c(9-12).

It localises to the plastid. The protein localises to the chloroplast thylakoid membrane. It catalyses the reaction ATP + H2O + 4 H(+)(in) = ADP + phosphate + 5 H(+)(out). Produces ATP from ADP in the presence of a proton gradient across the membrane. The catalytic sites are hosted primarily by the beta subunits. The sequence is that of ATP synthase subunit beta, chloroplastic from Barbarea verna (Land cress).